We begin with the raw amino-acid sequence, 396 residues long: ATP-dependent RNA helicase eIF4A (396 aa).

A Q motif motif is present at residues 22-50; that stretch reads HKFDELKLKEVLLRGIYGYGFVDPSAIQQ. The 171-residue stretch at 53-223 folds into the Helicase ATP-binding domain; that stretch reads ILPIIEGHDV…DKFMNKPVRI (171 aa). 66-73 is an ATP binding site; that stretch reads AQSGTGKT. Positions 171-174 match the DEAD box motif; that stretch reads DEAD. Positions 234 to 395 constitute a Helicase C-terminal domain; sequence GIQQYYINVE…ELPANIADLF (162 aa).

It belongs to the DEAD box helicase family. eIF4A subfamily. Component of the eIF4F complex, which composition varies with external and internal environmental conditions. It is composed of at least eIF4A, eIF4E and eIF4G.

The protein resides in the cytoplasm. The enzyme catalyses ATP + H2O = ADP + phosphate + H(+). Functionally, ATP-dependent RNA helicase which is a subunit of the eIF4F complex involved in cap recognition and is required for mRNA binding to ribosome. In the current model of translation initiation, eIF4A unwinds RNA secondary structures in the 5'-UTR of mRNAs which is necessary to allow efficient binding of the small ribosomal subunit, and subsequent scanning for the initiator codon. This chain is ATP-dependent RNA helicase eIF4A (TIF1), found in Eremothecium gossypii (strain ATCC 10895 / CBS 109.51 / FGSC 9923 / NRRL Y-1056) (Yeast).